We begin with the raw amino-acid sequence, 346 residues long: Peripherin-2 (346 aa).

At 1-24 (MALLKVKFDQKKRVKLAQGLWLMN) the chain is on the cytoplasmic side. The helical transmembrane segment at 25-43 (WLSVLAGIVLFSLGLFLKI) threads the bilayer. The Lumenal segment spans residues 44-61 (ELRKRSDVMDNSESHFVP). The chain crosses the membrane as a helical span at residues 62-80 (NSLIGVGVLSCVFNSLAGK). At 81 to 99 (ICYDALDPAKYAKWKPWLK) the chain is on the cytoplasmic side. A helical transmembrane segment spans residues 100–123 (LYLAVCVFFNVILFLVALCCFLLR). At 124-264 (GSLESTLAYG…LNYYSSLMNS (141 aa)) the chain is on the lumenal side. Asparagine 229 is a glycosylation site (N-linked (GlcNAc...) asparagine). Residues 265-290 (MGVVTLLIWLFEVSITAGLRFLHTAL) form a helical membrane-spanning segment. At 291 to 346 (ESVSNPEDPECESEGWLLENSVSETWKAFLESFKKLGKSNQVEAEAADAGQAPEAG) the chain is on the cytoplasmic side. An interaction with MREG region spans residues 341–346 (QAPEAG).

The protein belongs to the PRPH2/ROM1 family. In terms of assembly, homodimer; disulfide-linked. Forms a homotetramer. Forms a heterotetramer with ROM1. Homotetramer and heterotetramer core complexes go on to form higher order complexes by formation of intermolecular disulfide bonds. Interacts with MREG. Interacts with STX3. Interacts with SNAP25. In terms of tissue distribution, retina (photoreceptor). In rim region of ROS (rod outer segment) disks.

The protein localises to the membrane. It is found in the cell projection. The protein resides in the cilium. It localises to the photoreceptor outer segment. Its subcellular location is the photoreceptor inner segment. Functionally, essential for retina photoreceptor outer segment disk morphogenesis, may also play a role with ROM1 in the maintenance of outer segment disk structure. Required for the maintenance of retinal outer nuclear layer thickness. Required for the correct development and organization of the photoreceptor inner segment. In Rattus norvegicus (Rat), this protein is Peripherin-2 (Prph2).